The sequence spans 122 residues: Large ribosomal subunit protein uL14 (122 aa).

The protein belongs to the universal ribosomal protein uL14 family. Part of the 50S ribosomal subunit. Forms a cluster with proteins L3 and L19. In the 70S ribosome, L14 and L19 interact and together make contacts with the 16S rRNA in bridges B5 and B8.

In terms of biological role, binds to 23S rRNA. Forms part of two intersubunit bridges in the 70S ribosome. The polypeptide is Large ribosomal subunit protein uL14 (Shewanella sediminis (strain HAW-EB3)).